The following is a 563-amino-acid chain: Chitinase A (563 aa).

Residues 1–23 (MRKFNKPLLALLIGSTLCSAAQA) form the signal peptide. Residues 158-559 (KVVGSYFVEW…NSMNASLGNS (402 aa)) enclose the GH18 domain. Residue glutamate 315 is the Proton donor of the active site.

It belongs to the glycosyl hydrolase 18 family. Chitinase class II subfamily.

It carries out the reaction Random endo-hydrolysis of N-acetyl-beta-D-glucosaminide (1-&gt;4)-beta-linkages in chitin and chitodextrins.. This Serratia marcescens protein is Chitinase A (chiA).